We begin with the raw amino-acid sequence, 123 residues long: ATP synthase epsilon chain (123 aa).

Belongs to the ATPase epsilon chain family. As to quaternary structure, F-type ATPases have 2 components, CF(1) - the catalytic core - and CF(0) - the membrane proton channel. CF(1) has five subunits: alpha(3), beta(3), gamma(1), delta(1), epsilon(1). CF(0) has three main subunits: a, b and c.

It localises to the cell inner membrane. Functionally, produces ATP from ADP in the presence of a proton gradient across the membrane. In Helicobacter pylori (strain P12), this protein is ATP synthase epsilon chain.